The primary structure comprises 274 residues: Sulfur carrier protein FdhD (274 aa).

C121 functions as the Cysteine persulfide intermediate in the catalytic mechanism. 258–263 contributes to the Mo-bis(molybdopterin guanine dinucleotide) binding site; the sequence is FSKPGR.

Belongs to the FdhD family.

It is found in the cytoplasm. Its function is as follows. Required for formate dehydrogenase (FDH) activity. Acts as a sulfur carrier protein that transfers sulfur from IscS to the molybdenum cofactor prior to its insertion into FDH. In Yersinia pseudotuberculosis serotype IB (strain PB1/+), this protein is Sulfur carrier protein FdhD.